Reading from the N-terminus, the 173-residue chain is VQ motif-containing protein 31 (173 aa).

Residues 27 to 36 (FREIVQRLTG) carry the VQ motif. Threonine 46 carries the phosphothreonine modification. Disordered stretches follow at residues 76–105 (EIVK…TSPV) and 143–173 (LHPS…SGKP). A compositionally biased stretch (polar residues) spans 86-105 (PTGTTPSSKSGNTNLLTSPV). A phosphoserine mark is found at serine 92, serine 103, serine 146, and serine 149. Over residues 154–165 (TEPELLTLFPLT) the composition is skewed to low complexity. A Phosphothreonine modification is found at threonine 165. 2 positions are modified to phosphoserine: serine 166 and serine 170.

Phosphorylated on serine and threonine residues by MPK6.

The protein localises to the nucleus. In terms of biological role, may modulate WRKY transcription factor activities. This Arabidopsis thaliana (Mouse-ear cress) protein is VQ motif-containing protein 31.